The following is a 331-amino-acid chain: Beta-hexosaminidase (331 aa).

Substrate is bound by residues D60, R68, R133, and 163-164; that span reads KH. The Proton donor/acceptor role is filled by H176. Catalysis depends on D247, which acts as the Nucleophile.

It belongs to the glycosyl hydrolase 3 family. NagZ subfamily.

The protein localises to the cytoplasm. It catalyses the reaction Hydrolysis of terminal non-reducing N-acetyl-D-hexosamine residues in N-acetyl-beta-D-hexosaminides.. It functions in the pathway cell wall biogenesis; peptidoglycan recycling. Functionally, plays a role in peptidoglycan recycling by cleaving the terminal beta-1,4-linked N-acetylglucosamine (GlcNAc) from peptide-linked peptidoglycan fragments, giving rise to free GlcNAc, anhydro-N-acetylmuramic acid and anhydro-N-acetylmuramic acid-linked peptides. In Xanthomonas campestris pv. campestris (strain B100), this protein is Beta-hexosaminidase.